The chain runs to 829 residues: G-type lectin S-receptor-like serine/threonine-protein kinase At1g34300 (829 aa).

Positions Met1–Ser25 are cleaved as a signal peptide. 2 consecutive Bulb-type lectin domains span residues Thr26–Asp140 and Thr143–Ala260. Residues Thr26–His421 are Extracellular-facing. Asn46, Asn98, Asn130, Asn151, Asn172, Asn178, Asn189, and Asn195 each carry an N-linked (GlcNAc...) asparagine glycan. Residues Ala264–Val301 enclose the EGF-like domain. 5 disulfide bridges follow: Cys268–Cys280, Cys274–Cys289, Cys317–Cys399, Cys350–Cys373, and Cys354–Cys360. 2 N-linked (GlcNAc...) asparagine glycosylation sites follow: Asn283 and Asn320. In terms of domain architecture, Apple spans Cys317–Cys399. Asn416 carries an N-linked (GlcNAc...) asparagine glycan. Residues Leu422–Gly442 traverse the membrane as a helical segment. Topologically, residues Leu443 to Ser829 are cytoplasmic. Residues Lys484 to Ile759 form the Protein kinase domain. Residues Leu490–Val498 and Lys512 each bind ATP. A Phosphoserine modification is found at Ser532. Residues Asp572–Thr589 are caM-binding. The Proton acceptor role is filled by Asp608. Phosphoserine occurs at positions 625 and 799.

Belongs to the protein kinase superfamily. Ser/Thr protein kinase family.

It localises to the cell membrane. The catalysed reaction is L-seryl-[protein] + ATP = O-phospho-L-seryl-[protein] + ADP + H(+). It carries out the reaction L-threonyl-[protein] + ATP = O-phospho-L-threonyl-[protein] + ADP + H(+). The chain is G-type lectin S-receptor-like serine/threonine-protein kinase At1g34300 from Arabidopsis thaliana (Mouse-ear cress).